We begin with the raw amino-acid sequence, 331 residues long: MRNSIFEQEETFQDLSLRPKSIEKFVGQQRVVENLQVFIDSAQKRNDSLDHVLFCGPPGLGKTTLAHIISNELESRIHTTAGPLLSKAGDIAAILTNLHKNDILFIDEIHRLPSAVEEVLYPAMEDYHLDLIVGDGPAAKSIRINLAKFTLVAATTRIGMLSNPLRDRFGITLRLDFYTVSELLQLLQQAAERLSVNIENGAMIELAKRSRGTPRIALRLLKRVRDFLEVSDSDVITREFADLALNKMEVDQFGLDKLDYTYMDFIAKNYSDNPVGIKTIAAAISEKEDSIEELIEPYLIKIGFLSRTQRGRRLTGKALDYLSTINSARLP.

The tract at residues 1 to 178 (MRNSIFEQEE…FGITLRLDFY (178 aa)) is large ATPase domain (RuvB-L). ATP is bound by residues Leu17, Arg18, Gly59, Lys62, Thr63, Thr64, 125–127 (EDY), Arg168, Tyr178, and Arg215. Position 63 (Thr63) interacts with Mg(2+). Residues 179–249 (TVSELLQLLQ…FADLALNKME (71 aa)) form a small ATPAse domain (RuvB-S) region. The tract at residues 252-331 (QFGLDKLDYT…LSTINSARLP (80 aa)) is head domain (RuvB-H). Residues Arg307 and Arg312 each coordinate DNA.

Belongs to the RuvB family. Homohexamer. Forms an RuvA(8)-RuvB(12)-Holliday junction (HJ) complex. HJ DNA is sandwiched between 2 RuvA tetramers; dsDNA enters through RuvA and exits via RuvB. An RuvB hexamer assembles on each DNA strand where it exits the tetramer. Each RuvB hexamer is contacted by two RuvA subunits (via domain III) on 2 adjacent RuvB subunits; this complex drives branch migration. In the full resolvosome a probable DNA-RuvA(4)-RuvB(12)-RuvC(2) complex forms which resolves the HJ.

The protein localises to the cytoplasm. The enzyme catalyses ATP + H2O = ADP + phosphate + H(+). The RuvA-RuvB-RuvC complex processes Holliday junction (HJ) DNA during genetic recombination and DNA repair, while the RuvA-RuvB complex plays an important role in the rescue of blocked DNA replication forks via replication fork reversal (RFR). RuvA specifically binds to HJ cruciform DNA, conferring on it an open structure. The RuvB hexamer acts as an ATP-dependent pump, pulling dsDNA into and through the RuvAB complex. RuvB forms 2 homohexamers on either side of HJ DNA bound by 1 or 2 RuvA tetramers; 4 subunits per hexamer contact DNA at a time. Coordinated motions by a converter formed by DNA-disengaged RuvB subunits stimulates ATP hydrolysis and nucleotide exchange. Immobilization of the converter enables RuvB to convert the ATP-contained energy into a lever motion, pulling 2 nucleotides of DNA out of the RuvA tetramer per ATP hydrolyzed, thus driving DNA branch migration. The RuvB motors rotate together with the DNA substrate, which together with the progressing nucleotide cycle form the mechanistic basis for DNA recombination by continuous HJ branch migration. Branch migration allows RuvC to scan DNA until it finds its consensus sequence, where it cleaves and resolves cruciform DNA. The protein is Holliday junction branch migration complex subunit RuvB of Neorickettsia sennetsu (strain ATCC VR-367 / Miyayama) (Ehrlichia sennetsu).